A 443-amino-acid chain; its full sequence is ATP-dependent protease ATPase subunit HslU (443 aa).

Residues I18, 60–65 (GVGKTE), D256, E321, and R393 each bind ATP.

The protein belongs to the ClpX chaperone family. HslU subfamily. In terms of assembly, a double ring-shaped homohexamer of HslV is capped on each side by a ring-shaped HslU homohexamer. The assembly of the HslU/HslV complex is dependent on binding of ATP.

It is found in the cytoplasm. ATPase subunit of a proteasome-like degradation complex; this subunit has chaperone activity. The binding of ATP and its subsequent hydrolysis by HslU are essential for unfolding of protein substrates subsequently hydrolyzed by HslV. HslU recognizes the N-terminal part of its protein substrates and unfolds these before they are guided to HslV for hydrolysis. The chain is ATP-dependent protease ATPase subunit HslU from Salmonella arizonae (strain ATCC BAA-731 / CDC346-86 / RSK2980).